We begin with the raw amino-acid sequence, 600 residues long: Elongation factor 4 (600 aa).

Residues S5–E187 enclose the tr-type G domain. Residues D17–T22 and N134–D137 each bind GTP.

Belongs to the TRAFAC class translation factor GTPase superfamily. Classic translation factor GTPase family. LepA subfamily.

Its subcellular location is the cell inner membrane. The catalysed reaction is GTP + H2O = GDP + phosphate + H(+). Required for accurate and efficient protein synthesis under certain stress conditions. May act as a fidelity factor of the translation reaction, by catalyzing a one-codon backward translocation of tRNAs on improperly translocated ribosomes. Back-translocation proceeds from a post-translocation (POST) complex to a pre-translocation (PRE) complex, thus giving elongation factor G a second chance to translocate the tRNAs correctly. Binds to ribosomes in a GTP-dependent manner. This chain is Elongation factor 4, found in Paramagnetospirillum magneticum (strain ATCC 700264 / AMB-1) (Magnetospirillum magneticum).